A 132-amino-acid chain; its full sequence is DNA-directed RNA polymerase subunit omega (132 aa).

Belongs to the RNA polymerase subunit omega family. The RNAP catalytic core consists of 2 alpha, 1 beta, 1 beta' and 1 omega subunit. When a sigma factor is associated with the core the holoenzyme is formed, which can initiate transcription.

The enzyme catalyses RNA(n) + a ribonucleoside 5'-triphosphate = RNA(n+1) + diphosphate. Promotes RNA polymerase assembly. Latches the N- and C-terminal regions of the beta' subunit thereby facilitating its interaction with the beta and alpha subunits. This chain is DNA-directed RNA polymerase subunit omega, found in Bartonella bacilliformis (strain ATCC 35685 / KC583 / Herrer 020/F12,63).